A 788-amino-acid polypeptide reads, in one-letter code: Auxin response factor 4 (788 aa).

The span at 1–19 shows a compositional bias: acidic residues; sequence MEFDLNTEIAEVEEEENDD. A disordered region spans residues 1–53; sequence MEFDLNTEIAEVEEEENDDVGVGVGGGTRIDKGRLGISPSSSSSCSSGSSSSS. Low complexity predominate over residues 38 to 53; the sequence is SPSSSSSCSSGSSSSS. Residues 177-279 constitute a DNA-binding region (TF-B3); that stretch reads FCKTLTASDT…ELRLGIRRAA (103 aa). Residues 413 to 433 are disordered; that stretch reads LSIQSSPRPKRPWAGLLDTTP. A PB1 domain is found at 665–747; sequence RICTKVHKQG…VVWKIHLYTK (83 aa).

This sequence belongs to the ARF family. In terms of assembly, homodimers and heterodimers. In terms of tissue distribution, expressed in the whole plant.

It localises to the nucleus. Functionally, auxin response factors (ARFs) are transcriptional factors that bind specifically to the DNA sequence 5'-TGTCTC-3' found in the auxin-responsive promoter elements (AuxREs). Could act as transcriptional activator or repressor. Formation of heterodimers with Aux/IAA proteins may alter their ability to modulate early auxin response genes expression. The chain is Auxin response factor 4 (ARF4) from Arabidopsis thaliana (Mouse-ear cress).